Consider the following 108-residue polypeptide: Ig kappa chain V-V region MOPC 173 (108 aa).

The framework-1 stretch occupies residues aspartate 1–cysteine 23. A disulfide bridge links cysteine 23 with cysteine 88. The complementarity-determining-1 stretch occupies residues serine 24 to residue 34. Positions tryptophan 35 to tyrosine 49 are framework-2. The complementarity-determining-2 stretch occupies residues tyrosine 50–serine 56. Residues glycine 57–cysteine 88 are framework-3. The segment at glutamine 89–threonine 97 is complementarity-determining-3. Residues phenylalanine 98–arginine 108 are framework-4.

The sequence is that of Ig kappa chain V-V region MOPC 173 from Mus musculus (Mouse).